The primary structure comprises 262 residues: Hydroxyethylthiazole kinase (262 aa).

Residue methionine 50 participates in substrate binding. Arginine 125 and threonine 171 together coordinate ATP. Glycine 198 provides a ligand contact to substrate.

The protein belongs to the Thz kinase family. It depends on Mg(2+) as a cofactor.

It catalyses the reaction 5-(2-hydroxyethyl)-4-methylthiazole + ATP = 4-methyl-5-(2-phosphooxyethyl)-thiazole + ADP + H(+). It participates in cofactor biosynthesis; thiamine diphosphate biosynthesis; 4-methyl-5-(2-phosphoethyl)-thiazole from 5-(2-hydroxyethyl)-4-methylthiazole: step 1/1. Catalyzes the phosphorylation of the hydroxyl group of 4-methyl-5-beta-hydroxyethylthiazole (THZ). The polypeptide is Hydroxyethylthiazole kinase (Escherichia coli O139:H28 (strain E24377A / ETEC)).